The primary structure comprises 58 residues: Large ribosomal subunit protein bL32 (58 aa).

The span at 1–15 shows a compositional bias: basic residues; the sequence is MAVPKKKTSKAKRNQ. The interval 1-23 is disordered; the sequence is MAVPKKKTSKAKRNQRSATWKGK.

This sequence belongs to the bacterial ribosomal protein bL32 family.

In Synechococcus sp. (strain CC9902), this protein is Large ribosomal subunit protein bL32.